We begin with the raw amino-acid sequence, 357 residues long: Histidinol-phosphate aminotransferase 2 (357 aa).

Lys215 bears the N6-(pyridoxal phosphate)lysine mark.

This sequence belongs to the class-II pyridoxal-phosphate-dependent aminotransferase family. Histidinol-phosphate aminotransferase subfamily. Homodimer. It depends on pyridoxal 5'-phosphate as a cofactor.

It carries out the reaction L-histidinol phosphate + 2-oxoglutarate = 3-(imidazol-4-yl)-2-oxopropyl phosphate + L-glutamate. Its pathway is amino-acid biosynthesis; L-histidine biosynthesis; L-histidine from 5-phospho-alpha-D-ribose 1-diphosphate: step 7/9. The chain is Histidinol-phosphate aminotransferase 2 from Thiobacillus denitrificans (strain ATCC 25259 / T1).